The chain runs to 209 residues: Uridine kinase (209 aa).

Residue 12–19 coordinates ATP; the sequence is GGSGSGKT.

Belongs to the uridine kinase family.

The protein resides in the cytoplasm. It carries out the reaction uridine + ATP = UMP + ADP + H(+). The enzyme catalyses cytidine + ATP = CMP + ADP + H(+). It participates in pyrimidine metabolism; CTP biosynthesis via salvage pathway; CTP from cytidine: step 1/3. The protein operates within pyrimidine metabolism; UMP biosynthesis via salvage pathway; UMP from uridine: step 1/1. This is Uridine kinase from Listeria monocytogenes serotype 4b (strain CLIP80459).